The following is a 467-amino-acid chain: 3-isopropylmalate dehydratase large subunit (467 aa).

Cysteine 349, cysteine 409, and cysteine 412 together coordinate [4Fe-4S] cluster. The disordered stretch occupies residues 422-443 (PGQRSASTSNRNFEGRQGRGGR).

This sequence belongs to the aconitase/IPM isomerase family. LeuC type 1 subfamily. Heterodimer of LeuC and LeuD. [4Fe-4S] cluster serves as cofactor.

The catalysed reaction is (2R,3S)-3-isopropylmalate = (2S)-2-isopropylmalate. The protein operates within amino-acid biosynthesis; L-leucine biosynthesis; L-leucine from 3-methyl-2-oxobutanoate: step 2/4. Catalyzes the isomerization between 2-isopropylmalate and 3-isopropylmalate, via the formation of 2-isopropylmaleate. This chain is 3-isopropylmalate dehydratase large subunit, found in Paramagnetospirillum magneticum (strain ATCC 700264 / AMB-1) (Magnetospirillum magneticum).